The following is a 998-amino-acid chain: RNA-directed RNA polymerase (998 aa).

A helical transmembrane segment spans residues 17-34 (LPVGIATVSGCGAVVYCI). The cytoplasmic stretch occupies residues 35 to 998 (SKFWGYGAIA…AQPQPSNNRK (964 aa)). Residues 91–282 (NGHAVSGAVR…LVYTIPQYVI (192 aa)) form a capping region. The For RdRp/TNTase activity role is filled by Asp-692. Residues 901–998 (AKQTRANPGT…AQPQPSNNRK (98 aa)) are disordered. Composition is skewed to polar residues over residues 904 to 913 (TRANPGTSRP) and 947 to 961 (GKTNGKSDGNITAGE). Residues 971–984 (KGPRGGKTNTRRTP) are compositionally biased toward basic residues.

It belongs to the nodaviridae RNA polymerase family. Homododecamer. Forms 2 stacked rings of 35-nm in diameter, arranged in a crown-like structure at the opening of virus-induced replication vesicles. Interacts with protein B2. The cofactor is Mn(2+).

It is found in the host mitochondrion outer membrane. It carries out the reaction RNA(n) + a ribonucleoside 5'-triphosphate = RNA(n+1) + diphosphate. With respect to regulation, drastically inhibited by phosphonoacetic acid. Only slightly inhibited by gliotoxin. RNA-dependent RNA polymerase, which replicates the viral genome composed of 2 RNA segments, RNA1 and RNA2. Does not need an exogenous primer. Also possesses a terminal nucleotidyl transferase (TNTase) activity. The TNTase catalyzes the addition of nucleotide to the 3'-end of plus- and minus-stranded RNAs, probably to repair the 3'-end nucleotide loss. Forms the open necked connection to the cytosol of the virus-induced replication vesicles. Mediates viral RNA1 recruitment. This chain is RNA-directed RNA polymerase, found in Heteronychus arator (African black beetle).